Here is a 166-residue protein sequence, read N- to C-terminus: Podoplanin (166 aa).

The signal sequence occupies residues 1–22; it reads MWTAPVLLWVLGSVWFWDSAQG. Topologically, residues 23 to 135 are extracellular; the sequence is GAIGALEDDL…KKDGLAVVTL (113 aa). Residues Thr-34, Thr-52, Thr-55, and Thr-56 are each glycosylated (O-linked (GalNAc...) threonine). Residues 54–63 show a composition bias toward basic and acidic residues; sequence DTTGELDKST. The segment at 54–124 is disordered; it reads DTTGELDKST…DNAGGETQTT (71 aa). O-linked (GalNAc...) serine glycosylation is present at Ser-62. Thr-63, Thr-71, and Thr-80 each carry an O-linked (GalNAc...) threonine glycan. An O-linked (GalNAc...) serine glycan is attached at Ser-81. Thr-83 carries an O-linked (GalNAc...) threonine glycan. The O-linked (GalNAc...) serine glycan is linked to Ser-84. The span at 84 to 93 shows a compositional bias: basic and acidic residues; that stretch reads SDHDHKEHES. Thr-94, Thr-95, Thr-96, Thr-101, Thr-105, Thr-109, and Thr-110 each carry an O-linked (GalNAc...) threonine glycan. A compositionally biased stretch (polar residues) spans 94–103; sequence TTTVKAVTSH. Residues 104 to 114 show a composition bias toward basic and acidic residues; that stretch reads STDKKTTHPNR. The chain crosses the membrane as a helical span at residues 136–156; that stretch reads VGIIIGVLLAIGFIGGIIIVV. Residues 137 to 141 form a requires for dimerization and lipid rafts association region; the sequence is GIIIG. At 157–166 the chain is on the cytoplasmic side; sequence MRKISGRFSP. The requires for interaction with MSN and EZR stretch occupies residues 158–159; sequence RK.

It belongs to the podoplanin family. Homodimer. Interacts with CLEC1B; the interaction is independent of CLEC1B glycosylation and activates CLEC1B; the interaction is dependent of sialic acid on O-glycans. Interacts with CD9; this interaction is homophilic and attenuates platelet aggregation and pulmonary metastasis induced by PDPN. Interacts with LGALS8; the interaction is glycosylation-dependent; may participate in connection of the lymphatic endothelium to the surrounding extracellular matrix. Interacts with HSPA9. Interacts (via extracellular domain) with CD44; this interaction is required for PDPN-mediated directional migration and regulation of lamellipodia extension/stabilization during cell spreading and migration. Interacts (via cytoplasmic domain) with MSN and EZR; activates RHOA and promotes epithelial-mesenchymal transition. Interacts with CCL21; relocalized PDPN to the basolateral membrane. Post-translationally, extensively O-glycosylated. Contains sialic acid residues. O-glycosylation is necessary for platelet aggregation activity. Disialylated at Thr-52; sialic acid is critical for platelet-aggregating activity and for CLEC1B interaction. The N-terminus is blocked. As to expression, in adult kidney, expressed on the urinary surface and foot processes of podocytes and in parietal epithelial cells of Bowman's capsule where it is localized to luminal surfaces. In lung, expressed exclusively on luminal surfaces of type I alveolar epithelial cells and pleural mesothelial cells. Not expressed in type II alveolar cells. In bone, expressed in osteocytes and osteoblasts. In spleen, liver, stomach and intestine, expressed in mesoepithelium. Also expressed in thymic epithelial cells, choroid plexus and leptomeninges.

The protein resides in the membrane. It is found in the cell projection. It localises to the lamellipodium membrane. The protein localises to the filopodium membrane. Its subcellular location is the microvillus membrane. The protein resides in the ruffle membrane. It is found in the membrane raft. It localises to the apical cell membrane. The protein localises to the basolateral cell membrane. Its subcellular location is the invadopodium. Its function is as follows. Mediates effects on cell migration and adhesion through its different partners. During development plays a role in blood and lymphatic vessels separation by binding CLEC1B, triggering CLEC1B activation in platelets and leading to platelet activation and/or aggregation. Interaction with CD9, on the contrary, attenuates platelet aggregation and pulmonary metastasis induced by PDPN. Mediates effects on cell migration and adhesion through its different partners. Through MSN or EZR interaction promotes epithelial-mesenchymal transition (EMT) leading to ERZ phosphorylation and triggering RHOA activation leading to cell migration increase and invasiveness. Interaction with CD44 promotes directional cell migration in epithelial and tumor cells. In lymph nodes (LNs), controls fibroblastic reticular cells (FRCs) adhesion to the extracellular matrix (ECM) and contraction of the actomyosin by maintaining ERM proteins (EZR; MSN and RDX) and MYL9 activation through association with unknown transmembrane proteins. Engagement of CLEC1B by PDPN promotes FRCs relaxation by blocking lateral membrane interactions leading to reduction of ERM proteins (EZR; MSN and RDX) and MYL9 activation. Through binding with LGALS8 may participate in connection of the lymphatic endothelium to the surrounding extracellular matrix. In keratinocytes, induces changes in cell morphology showing an elongated shape, numerous membrane protrusions, major reorganization of the actin cytoskeleton, increased motility and decreased cell adhesion. Controls invadopodia stability and maturation leading to efficient degradation of the extracellular matrix (ECM) in tumor cells through modulation of RHOC activity in order to activate ROCK1/ROCK2 and LIMK1/LIMK2 and inactivation of CFL1. Required for normal lung cell proliferation and alveolus formation at birth. Does not function as a water channel or as a regulator of aquaporin-type water channels. Does not have any effect on folic acid or amino acid transport. The polypeptide is Podoplanin (Rattus norvegicus (Rat)).